A 108-amino-acid polypeptide reads, in one-letter code: Integration host factor subunit alpha (108 aa).

This sequence belongs to the bacterial histone-like protein family. Heterodimer of an alpha and a beta chain.

This protein is one of the two subunits of integration host factor, a specific DNA-binding protein that functions in genetic recombination as well as in transcriptional and translational control. This chain is Integration host factor subunit alpha, found in Rhodopseudomonas palustris (strain BisB18).